The chain runs to 420 residues: Membrane protein UL43 homolog (420 aa).

A run of 11 helical transmembrane segments spans residues 58 to 78, 81 to 101, 114 to 134, 157 to 177, 181 to 201, 203 to 223, 278 to 298, 312 to 332, 343 to 363, 364 to 384, and 399 to 419; these read IFSI…IQFI, KIIY…AFIV, IGKP…TLIT, LMCF…CLAT, LTWK…ISAP, GNIS…INVV, QIPM…VIAL, TDML…IFIP, IIIL…FGLV, LGPT…CINI, and VVKS…LVAL.

Belongs to the alphaherpesvirinae HHV-1 UL43 family.

The protein localises to the host membrane. This chain is Membrane protein UL43 homolog (MDV056), found in Gallus gallus (Chicken).